Here is a 333-residue protein sequence, read N- to C-terminus: Flap endonuclease 1 (333 aa).

The tract at residues 1–99 (MGVALREVLT…ETIESRREVR (99 aa)) is N-domain. Mg(2+) contacts are provided by Asp28, Asp81, Glu153, Glu155, Asp174, Asp176, and Asp235. The tract at residues 117-256 (EAYKQARASS…TALKIVKKDG (140 aa)) is I-domain. The interaction with PCNA stretch occupies residues 325-333 (GQKTLDRWF).

It belongs to the XPG/RAD2 endonuclease family. FEN1 subfamily. Interacts with PCNA. PCNA stimulates the nuclease activity without altering cleavage specificity. Mg(2+) is required as a cofactor.

Structure-specific nuclease with 5'-flap endonuclease and 5'-3' exonuclease activities involved in DNA replication and repair. During DNA replication, cleaves the 5'-overhanging flap structure that is generated by displacement synthesis when DNA polymerase encounters the 5'-end of a downstream Okazaki fragment. Binds the unpaired 3'-DNA end and kinks the DNA to facilitate 5' cleavage specificity. Cleaves one nucleotide into the double-stranded DNA from the junction in flap DNA, leaving a nick for ligation. Also involved in the base excision repair (BER) pathway. Acts as a genome stabilization factor that prevents flaps from equilibrating into structures that lead to duplications and deletions. Also possesses 5'-3' exonuclease activity on nicked or gapped double-stranded DNA. In Methanosphaerula palustris (strain ATCC BAA-1556 / DSM 19958 / E1-9c), this protein is Flap endonuclease 1.